The chain runs to 407 residues: Cation efflux system protein CusB (407 aa).

The first 26 residues, 1–26 (MKKIALIIGSMIAGGIISAAGFTWFA), serve as a signal peptide directing secretion.

It belongs to the membrane fusion protein (MFP) (TC 8.A.1) family. The cus efflux system is composed of CusA, CusB, CusC and CusF.

Functionally, part of a cation efflux system that mediates resistance to copper and silver. The chain is Cation efflux system protein CusB (cusB) from Escherichia coli O6:H1 (strain CFT073 / ATCC 700928 / UPEC).